The sequence spans 356 residues: 5-amino-6-(D-ribitylamino)uracil--L-tyrosine 4-hydroxyphenyl transferase (356 aa).

A Radical SAM core domain is found at 47-281; sequence VTYIVNRNIN…AIARILLNTH (235 aa). Positions 61, 65, and 68 each coordinate [4Fe-4S] cluster.

Belongs to the radical SAM superfamily. CofH family. In terms of assembly, consists of two subunits, CofG and CofH. It depends on [4Fe-4S] cluster as a cofactor.

It catalyses the reaction 5-amino-6-(D-ribitylamino)uracil + L-tyrosine + S-adenosyl-L-methionine = 5-amino-5-(4-hydroxybenzyl)-6-(D-ribitylimino)-5,6-dihydrouracil + 2-iminoacetate + 5'-deoxyadenosine + L-methionine + H(+). It functions in the pathway cofactor biosynthesis; coenzyme F0 biosynthesis. Its function is as follows. Catalyzes the radical-mediated synthesis of 5-amino-5-(4-hydroxybenzyl)-6-(D-ribitylimino)-5,6-dihydrouracil from 5-amino-6-(D-ribitylamino)uracil and L-tyrosine. The sequence is that of 5-amino-6-(D-ribitylamino)uracil--L-tyrosine 4-hydroxyphenyl transferase from Methanococcoides burtonii (strain DSM 6242 / NBRC 107633 / OCM 468 / ACE-M).